Reading from the N-terminus, the 997-residue chain is MKSYISLFFILCVIFNKNVIKCTGESQTGNTGGGQAGNTGGDQAGSTGGSPQGSTGASPQGSTGASPQGSTGASQPGSSEPSNPVSSGHSVSTVSVSQTSTSSEKQDTIQVKSALLKDYMGLKVTGPCNENFIMFLVPHIYIDVDTEDTNIELRTTLKKTNNAISFESNSGSLEKKKYVKLPSNGTTGEQGSSTGTVRGDTEPISDSSSSSSSSSSSSSSSSSSSSSSSSSSSESLPANGPDSPTVKPPRNLQNICETGKNFKLVVYIKENTLILKWKVYGETKDTTENNKVDVRKYLINEKETPFTNILIHAYKEHNGTNLIESKNYAIGSDIPEKCDTLASNCFLSGNFNIEKCFQCALLVEKENKNDVCYKYLSEDIVSKFKEIKAETEDDDEDDYTEYKLTESIDNILVKMFKTNENNDKSELIKLEEVDDSLKLELMNYCSLLKDVDTTGTLDNYGMGNEMDIFNNLKRLLIYHSEENINTLKNKFRNAAVCLKNVDDWIVNKRGLVLPELNYDLEYFNEHLYNDKNSPEDKDNKGKGVVHVDTTLEKEDTLSYDNSDNMFCNKEYCNRLKDENNCISNLQVEDQGNCDTSWIFASKYHLETIRCMKGYEPTKISALYVANCYKGEHKDRCDEGSSPMEFLQIIEDYGFLPAESNYPYNYVKVGEQCPKVEDHWMNLWDNGKILHNKNEPNSLDGKGYTAYESERFHDNMDAFVKIIKTEVMNKGSVIAYIKAENVMGYEFSGKKVQNLCGDDTADHAVNIVGYGNYVNSEGEKKSYWIVRNSWGPYWGDEGYFKVDMYGPTHCHFNFIHSVVIFNVDLPMNNKTTKKESKIYDYYLKASPEFYHNLYFKNFNVGKKNLFSEKEDNENNKKLGNNYIIFGQDTAGSGQSGKESNTALESAGTSNEVSERVHVYHILKHIKDGKIRMGMRKYIDTQDVNKKHSCTRSYAFNPENYEKCVNLCNVNWKTCEEKTSPGLCLSKLDTNNECYFCYV.

An N-terminal signal peptide occupies residues 1-22 (MKSYISLFFILCVIFNKNVIKC). Disordered stretches follow at residues 26–107 (SQTG…EKQD) and 181–252 (LPSN…PRNL). A compositionally biased stretch (gly residues) spans 30–51 (NTGGGQAGNTGGDQAGSTGGSP). The span at 52 to 67 (QGSTGASPQGSTGASP) shows a compositional bias: low complexity. Positions 68–84 (QGSTGASQPGSSEPSNP) are enriched in polar residues. Composition is skewed to low complexity over residues 85-103 (VSSG…STSS), 183-196 (SNGT…STGT), and 205-235 (SDSS…SSES). At Ser-183 the chain carries Phosphoserine. Asn-184 is a glycosylation site (N-linked (GlcNAc...) asparagine). An interaction with PTKL region spans residues 216 to 253 (SSSSSSSSSSSSSSSSSSESLPANGPDSPTVKPPRNLQ). Residue Asn-318 is glycosylated (N-linked (GlcNAc...) asparagine). Residues 373-390 (YKYLSEDIVSKFKEIKAE) form an interaction with host VTN region. Cys-445 and Cys-497 are oxidised to a cystine. A Phosphothreonine; by CPK1 modification is found at Thr-549. 5 disulfide bridges follow: Cys-567–Cys-572, Cys-581–Cys-610, Cys-593–Cys-636, Cys-627–Cys-672, and Cys-755–Cys-809. The interval 579-997 (NNCISNLQVE…TNNECYFCYV (419 aa)) is thiol-protease-like. Active-site residues include His-762 and Asn-787. A glycan (N-linked (GlcNAc...) asparagine) is linked at Asn-828. Residues 843–886 (KASPEFYHNLYFKNFNVGKKNLFSEKEDNENNKKLGNNYIIFGQ) constitute a propeptide, inhibition peptide. Position 866 is a phosphoserine (Ser-866).

It belongs to the peptidase C1 family. May interact (via C-terminus) with PTKL (via SAM domain). As to quaternary structure, interacts (via C-terminus) with human VTN (via hemopexin repeat 2); may form heterotetramers of two VTN and SERA5 P47 heterodimers; the interaction may protect merozoites from phagocytosis by host monocytes; VTN glycosylation appears to be dispensable for the interaction. In terms of assembly, monomer. Interacts with kinase CPK1/CDPK1 at the schizont stage. In terms of processing, phosphorylation by CPK1/CDPK1 increases SERA5 protease activity towards a synthetic peptide in vitro. Just prior to merozoite egress from host erythrocytes, proteolytically cleaved into multiple fragments. Cleaved by SUB1 into p47 and p73, p73 is further cleaved by SUB1 into p56 and p18 and p56 is further processed into p50 by an unidentified protease. p47 remains covalently associated with p18 via disulfide bond. p47 can be processed into p25n and p25c by SUB1. p25c and p25n remain associated with p18. Proteolytic processing is essential for merozoite egress from host erythrocytes. The cleavage of the propeptide to produce p50 is necessary for protease activity and to promote merozoite egress.

It localises to the parasitophorous vacuole. The protein localises to the secreted. Its subcellular location is the cell membrane. Its function is as follows. Plays an essential role during the asexual blood stage development by controlling the kinetics of merozoite egress from host erythrocytes. Specifically, prevents premature rupture of the parasitophorous vacuole and host erythrocyte membranes. In terms of biological role, may prevent merozoite phagocytosis by host monocytes via interaction with host VTN at the merozoite surface. Plays a role in parasite growth. Protease activity is controversial. Has been shown in a number of studies to have protease activity towards a synthetic peptide in vitro. Has also been shown to lack protease activity towards a synthetic peptide in vitro. This chain is Serine-repeat antigen protein 5, found in Plasmodium falciparum (isolate 3D7).